The chain runs to 276 residues: Large ribosomal subunit protein uL2 (276 aa).

Positions Pro218–Lys276 are disordered. The span at Lys258–Lys276 shows a compositional bias: basic residues.

It belongs to the universal ribosomal protein uL2 family. In terms of assembly, part of the 50S ribosomal subunit. Forms a bridge to the 30S subunit in the 70S ribosome.

Functionally, one of the primary rRNA binding proteins. Required for association of the 30S and 50S subunits to form the 70S ribosome, for tRNA binding and peptide bond formation. It has been suggested to have peptidyltransferase activity; this is somewhat controversial. Makes several contacts with the 16S rRNA in the 70S ribosome. The sequence is that of Large ribosomal subunit protein uL2 from Finegoldia magna (strain ATCC 29328 / DSM 20472 / WAL 2508) (Peptostreptococcus magnus).